The chain runs to 316 residues: tRNA dimethylallyltransferase (316 aa).

27–34 serves as a coordination point for ATP; sequence GATATGKT. 29–34 serves as a coordination point for substrate; sequence TATGKT. The interaction with substrate tRNA stretch occupies residues 52–55; sequence DSRQ.

This sequence belongs to the IPP transferase family. Monomer. The cofactor is Mg(2+).

The enzyme catalyses adenosine(37) in tRNA + dimethylallyl diphosphate = N(6)-dimethylallyladenosine(37) in tRNA + diphosphate. In terms of biological role, catalyzes the transfer of a dimethylallyl group onto the adenine at position 37 in tRNAs that read codons beginning with uridine, leading to the formation of N6-(dimethylallyl)adenosine (i(6)A). The sequence is that of tRNA dimethylallyltransferase from Treponema pallidum (strain Nichols).